Reading from the N-terminus, the 154-residue chain is MAAGSITSLPALPEDGGGAFPPGHFKDPKRLYCKNGGFFLRIHPDGRVDGVREKSDPHVKLQLQAEERGVVSIKGVCANRYLAMKEDGRLLASKCVTEECFFFERLESNNYNTYRSRKYSSWYVALKRTGQYKLGSKTGPGQKAILFLPMSAKS.

The propeptide occupies 1 to 9; the sequence is MAAGSITSL. The tract at residues 1–20 is disordered; sequence MAAGSITSLPALPEDGGGAF. Asn35 contributes to the heparin binding site. The residue at position 81 (Tyr81) is a Phosphotyrosine; by TEC. Lys94 participates in a covalent cross-link: Glycyl lysine isopeptide (Lys-Gly) (interchain with G-Cter in SUMO1). The segment at 127–143 is heparin-binding; the sequence is KRTGQYKLGSKTGPGQK.

It belongs to the heparin-binding growth factors family. In terms of assembly, monomer. Homodimer. Interacts with FGFR1, FGFR2, FGFR3 and FGFR4. Affinity between fibroblast growth factors (FGFs) and their receptors is increased by heparan sulfate glycosaminoglycans that function as coreceptors. Interacts with CSPG4, FGFBP1 and TEC. Found in a complex with FGFBP1, FGF1 and FGF2. Interacts with FGFBP3. Interacts with integrin ITGAV:ITGB3; the interaction is required for FGF2 signaling. Interacts with SNORC (via the extracellular domain). Interacts with GPC3. In terms of processing, phosphorylation at Tyr-81 regulates FGF2 unconventional secretion. As to expression, found in all tissues examined.

The protein localises to the secreted. It is found in the nucleus. Its function is as follows. Acts as a ligand for FGFR1, FGFR2, FGFR3 and FGFR4. Also acts as an integrin ligand which is required for FGF2 signaling. Binds to integrin ITGAV:ITGB3. Plays an important role in the regulation of cell survival, cell division, cell differentiation and cell migration. Functions as a potent mitogen in vitro. Can induce angiogenesis. Mediates phosphorylation of ERK1/2 and thereby promotes retinal lens fiber differentiation. This Rattus norvegicus (Rat) protein is Fibroblast growth factor 2 (Fgf2).